Here is a 202-residue protein sequence, read N- to C-terminus: Holliday junction resolvase RecU (202 aa).

4 residues coordinate Mg(2+): Thr-85, Asp-87, Glu-100, and Gln-119.

It belongs to the RecU family. The cofactor is Mg(2+).

The protein localises to the cytoplasm. It carries out the reaction Endonucleolytic cleavage at a junction such as a reciprocal single-stranded crossover between two homologous DNA duplexes (Holliday junction).. Its function is as follows. Endonuclease that resolves Holliday junction intermediates in genetic recombination. Cleaves mobile four-strand junctions by introducing symmetrical nicks in paired strands. Promotes annealing of linear ssDNA with homologous dsDNA. Required for DNA repair, homologous recombination and chromosome segregation. The chain is Holliday junction resolvase RecU from Streptococcus pyogenes serotype M5 (strain Manfredo).